The primary structure comprises 321 residues: GDP-L-fucose synthase (321 aa).

NADP(+)-binding positions include 10–16 (GHRGMVG), 36–41 (RDELNL), and 105–108 (LGSS). The Proton donor/acceptor role is filled by Y136. NADP(+) contacts are provided by residues K140, 163–166 (PTNL), and H179. R187, W202, R209, and D278 together coordinate substrate.

Belongs to the NAD(P)-dependent epimerase/dehydratase family. Fucose synthase subfamily. As to quaternary structure, homodimer.

Its subcellular location is the cytoplasm. The enzyme catalyses GDP-beta-L-fucose + NADP(+) = GDP-4-dehydro-alpha-D-rhamnose + NADPH + H(+). It functions in the pathway nucleotide-sugar biosynthesis; GDP-L-fucose biosynthesis via de novo pathway; GDP-L-fucose from GDP-alpha-D-mannose: step 2/2. The protein operates within exopolysaccharide biosynthesis; colanic acid biosynthesis. Subject to product inhibition by NADP and GDP-fucose. Functionally, catalyzes the two-step NADP-dependent conversion of GDP-4-dehydro-6-deoxy-D-mannose to GDP-fucose, involving an epimerase and a reductase reaction. This Escherichia coli (strain K12) protein is GDP-L-fucose synthase.